Consider the following 500-residue polypeptide: MYFLSLPSLVIVIPVGYLLFHLGYNLFFHPLRGYPGPLLWRASSLPWKIALLRGTMHHDLMRFHQKYGDTVRIKPDEISYANAQAWRDIHAHVPGRPEFLKDPVRLPLAPNGVMSILVSDTKNHARFRSLFGHAFSDKGLRTQESTIVQYADLLVEVLREVADTGRSAEMVYYFNMAIFDSIGALSFGESFDSLKSRQLHPWVDAIHKNLKSVAISHVLRSMGIEFLTPYVLPKELRGKRQENYSYAVEKLNKRMKMEGDQGDFWDKVLVKSADDNQRGDGMSAGEMLNNAAVMVVAGSETTASALSGAMYLLCLSGKIEKATAEIRKSFASPEDIDLISVSHLPYLTAVIDETLRMYPAVPGQPPRVVPASGATVCGRFVPEETRVGVSHLATYFADYNFTHADKFIPERHLQKTEEPFKYDNYGAYQPWSVGLRNCIGRNLAYAEVRLTLAKLLWHFDFTLDVDKTGNFLDQKIWSIWAKRELYMFIKTRGTSSSSPQ.

The helical transmembrane segment at 3–23 (FLSLPSLVIVIPVGYLLFHLG) threads the bilayer. 2 N-linked (GlcNAc...) asparagine glycosylation sites follow: asparagine 243 and asparagine 400. Position 438 (cysteine 438) interacts with heme.

Belongs to the cytochrome P450 family. Heme serves as cofactor.

Its subcellular location is the membrane. The enzyme catalyses versicolorin B + NADPH + O2 + H(+) = versicolorin A + NADP(+) + 2 H2O. It participates in mycotoxin biosynthesis; aflatoxin biosynthesis. Versicolorin B desaturase; part of the gene cluster that mediates the biosynthesis of aflatoxins, a group of polyketide-derived furanocoumarins, and part of the most toxic and carcinogenic compounds among the known mycotoxins. The four major aflatoxins produced by A.parasiticus are aflatoxin B1 (AFB1), aflatoxin B2 (AFB2), aflatoxin G1 (AFG1) and aflatoxin G2 (AFG2). Within the aflatoxin pathway, the versicolorin B desaturase aflL catalyzes the conversion of versicolorin B (VERB) to versicolorin A (VERA). The biosynthesis of aflatoxins begins with the norsolorinic acid synthase aflC that combines a hexanoyl starter unit produced by the fatty acid synthase aflA/aflB and 7 malonyl-CoA extender units to synthesize the precursor NOR. The second step is the conversion of NOR to averantin and requires the norsolorinic acid ketoreductase aflD, which catalyzes the dehydration of norsolorinic acid to form (1'S)-averantin. The norsolorinic acid reductases aflE and aflF may also play a role in the conversion of NOR to AVN. The cytochrome P450 monooxygenase aflG then catalyzes the hydroxylation of AVN to 5'hydroxyaverantin (HAVN). The next step is performed by the 5'-hydroxyaverantin dehydrogenase aflH that transforms HAVN to 5'-oxoaverantin (OAVN) which is further converted to averufin (AVF) by aflK that plays a dual role in the pathway, as a 5'-oxoaverantin cyclase that mediates conversion of 5'-oxoaverantin, as well as a versicolorin B synthase in a later step in the pathway. The averufin oxidase aflI catalyzes the conversion of AVF to versiconal hemiacetal acetate (VHA). VHA is then the substrate for the versiconal hemiacetal acetate esterase aflJ to yield versiconal (VAL). Versicolorin B synthase aflK then converts VAL to versicolorin B (VERB) by closing the bisfuran ring of aflatoxin which is required for DNA-binding, thus giving to aflatoxin its activity as a mutagen. Then, the activity of the versicolorin B desaturase aflL leads to versicolorin A (VERA). A branch point starts from VERB since it can also be converted to dihydrodemethylsterigmatocystin (DMDHST), probably also by aflL, VERA being a precursor for aflatoxins B1 and G1, and DMDHST for aflatoxins B2 and G2. Next, the versicolorin reductase aflM and the cytochrome P450 monooxygenase aflN are involved in conversion of VERA to demethylsterigmatocystin (DMST). AflX and aflY seem also involved in this step, through probable aflX-mediated epoxide ring-opening step following versicolorin A oxidation and aflY-mediated Baeyer-Villiger oxidation required for the formation of the xanthone ring. The methyltransferase aflO then leads to the modification of DMST to sterigmatocystin (ST), and of DMDHST to dihydrosterigmatocystin (DHST). Both ST and DHST are then substrates of the O-methyltransferase aflP to yield O-methylsterigmatocystin (OMST) and dihydro-O-methylsterigmatocystin (DHOMST), respectively. Finally OMST is converted to aflatoxins B1 and G1, and DHOMST to aflatoxins B2 and G2, via the action of several enzymes including O-methylsterigmatocystin oxidoreductase aflQ, the cytochrome P450 monooxygenase aflU, but also the NADH-dependent flavin oxidoreductase nadA which is specifically required for the synthesis of AFG1. This chain is Versicolorin B desaturase, found in Aspergillus parasiticus (strain ATCC 56775 / NRRL 5862 / SRRC 143 / SU-1).